The sequence spans 105 residues: Large ribosomal subunit protein eL36 (105 aa).

The tract at residues 1–20 is disordered; it reads MAKEAPAKTGLAVGLNKGHK.

The protein belongs to the eukaryotic ribosomal protein eL36 family.

The polypeptide is Large ribosomal subunit protein eL36 (rpl36) (Trichoderma hamatum).